The sequence spans 288 residues: UDP-3-O-acyl-N-acetylglucosamine deacetylase (288 aa).

Residues H79, H236, and D240 each coordinate Zn(2+). H263 functions as the Proton donor in the catalytic mechanism.

It belongs to the LpxC family. Zn(2+) is required as a cofactor.

It carries out the reaction a UDP-3-O-[(3R)-3-hydroxyacyl]-N-acetyl-alpha-D-glucosamine + H2O = a UDP-3-O-[(3R)-3-hydroxyacyl]-alpha-D-glucosamine + acetate. Its pathway is glycolipid biosynthesis; lipid IV(A) biosynthesis; lipid IV(A) from (3R)-3-hydroxytetradecanoyl-[acyl-carrier-protein] and UDP-N-acetyl-alpha-D-glucosamine: step 2/6. In terms of biological role, catalyzes the hydrolysis of UDP-3-O-myristoyl-N-acetylglucosamine to form UDP-3-O-myristoylglucosamine and acetate, the committed step in lipid A biosynthesis. The sequence is that of UDP-3-O-acyl-N-acetylglucosamine deacetylase from Rickettsia conorii (strain ATCC VR-613 / Malish 7).